A 409-amino-acid polypeptide reads, in one-letter code: MSDIKKVVLAYSGGLDTSVILKWLQDTYQCEVVTFTADLGQGEELEPARQKALQFGIKPEQIYIDDLREEFVRDFVFPMFRANTVYEGEYLLGTSIARPLIAKRLIEIVNATGADAICHGATGKGNDQVRFELGAYALKPDVKVIAPWREWDLLSREKLLAYAESHGIPIDMKHRQGGSPYSMDANLLHISYEGRHLEDPSAEAEEDMWRWTVSPEKAPDAAEYIELTYAKGDVVAIDGQQMPAHEVLAKLNELGGKHGIGRLDLVENRYVGMKSRGCYETPGGTILLKAHRAIESITLDREVAHLKDDLMPRYASLIYNGYWWAPERRALQVLIDHTQAHVNGTVRLKLYKGNVIVVGRDSKNDSLFDSTIATFEDDAGAYDQKDAGGFIKLNALRMRIAAKLDARRK.

ATP is bound by residues 10 to 18 and Ala37; that span reads AYSGGLDTS. The L-citrulline site is built by Tyr90 and Ser95. Gly120 provides a ligand contact to ATP. L-aspartate is bound by residues Thr122, Asn126, and Asp127. Residue Asn126 coordinates L-citrulline. L-citrulline-binding residues include Arg130, Ser182, Ser191, Glu267, and Tyr279.

The protein belongs to the argininosuccinate synthase family. Type 1 subfamily. As to quaternary structure, homotetramer.

The protein resides in the cytoplasm. It catalyses the reaction L-citrulline + L-aspartate + ATP = 2-(N(omega)-L-arginino)succinate + AMP + diphosphate + H(+). Its pathway is amino-acid biosynthesis; L-arginine biosynthesis; L-arginine from L-ornithine and carbamoyl phosphate: step 2/3. This chain is Argininosuccinate synthase, found in Thiobacillus denitrificans (strain ATCC 25259 / T1).